Consider the following 331-residue polypeptide: Activator of 90 kDa heat shock protein ATPase homolog 2 (331 aa).

This sequence belongs to the AHA1 family.

Functionally, co-chaperone that stimulates HSP90 ATPase activity. The sequence is that of Activator of 90 kDa heat shock protein ATPase homolog 2 (Ahsa2) from Mus musculus (Mouse).